Consider the following 403-residue polypeptide: Zinc finger CCHC domain-containing protein 3 (403 aa).

Positions 1–158 (MATGGGAEEE…PLQDEPAAAA (158 aa)) are disordered. 2 stretches are compositionally biased toward basic and acidic residues: residues 26 to 38 (ARGEEADGGREKM) and 47 to 65 (LAEKKGEFREPRPPRREEE). A compositionally biased stretch (gly residues) spans 67 to 79 (GGGGGSAGLGGPA). Positions 95–121 (GDPKGRRRDPAGEAVDPRKKKGAAEAG) are enriched in basic and acidic residues. Positions 128-139 (AAAAAMATPARP) are enriched in low complexity. Residue tyrosine 201 is modified to Phosphotyrosine. 3 CCHC-type zinc fingers span residues 335 to 350 (CFKCGSRTHMSGSCTQ), 352 to 368 (RCFRCGEEGHLSPYCRK), and 372 to 387 (CNLCGKRGHAFAQCPK).

In terms of assembly, interacts with CGAS. Interacts with RIGI. Interacts with IFIH1/MDA5.

It is found in the cytoplasm. In terms of biological role, nucleic acid-binding protein involved in innate immune response to DNA and RNA viruses. Binds DNA and RNA in the cytoplasm and acts by promoting recognition of viral nucleic acids by virus sensors, such as RIGI, IFIH1/MDA5 and CGAS. Acts as a co-sensor for recognition of double-stranded DNA (dsDNA) by cGAS in the cytoplasm, thereby playing a role in innate immune response to cytosolic dsDNA and DNA virus. Binds dsDNA and probably acts by promoting sensing of dsDNA by CGAS, leading to enhance CGAS oligomerization and activation. Promotes sensing of viral RNA by RIGI-like receptors proteins RIGI and IFIH1/MDA5 via two mechanisms: binds double-stranded RNA (dsRNA), enhancing the binding of RIGI and IFIH1/MDA5 to dsRNA and promotes 'Lys-63'-linked ubiquitination and subsequent activation of RIGI and IFIH1/MDA5. The protein is Zinc finger CCHC domain-containing protein 3 of Homo sapiens (Human).